We begin with the raw amino-acid sequence, 314 residues long: Methionyl-tRNA formyltransferase (314 aa).

A (6S)-5,6,7,8-tetrahydrofolate-binding site is contributed by 113–116; the sequence is SILP.

Belongs to the Fmt family.

The catalysed reaction is L-methionyl-tRNA(fMet) + (6R)-10-formyltetrahydrofolate = N-formyl-L-methionyl-tRNA(fMet) + (6S)-5,6,7,8-tetrahydrofolate + H(+). Attaches a formyl group to the free amino group of methionyl-tRNA(fMet). The formyl group appears to play a dual role in the initiator identity of N-formylmethionyl-tRNA by promoting its recognition by IF2 and preventing the misappropriation of this tRNA by the elongation apparatus. This chain is Methionyl-tRNA formyltransferase, found in Photobacterium profundum (strain SS9).